Reading from the N-terminus, the 302-residue chain is Putative peptide permease protein BMEII0861 (302 aa).

The disordered stretch occupies residues 1–22; that stretch reads MRSSIHASRLRKMGQSIPASTG. Transmembrane regions (helical) follow at residues 38-58, 101-121, 147-167, 230-250, and 268-288; these read IFGLVLLTPLLFAVLTYPLWL, LLVAVSSVVLSTAIGFLIGAI, IFLLVLASIIGSGIWSTVVVI, ILLEAGLSFLGLGVPPPAASW, and WQWLFPGGALVLAVLAINFIG. Positions 97 to 288 constitute an ABC transmembrane type-1 domain; the sequence is GRISLLVAVS…LAVLAINFIG (192 aa).

Belongs to the binding-protein-dependent transport system permease family. As to quaternary structure, the complex is composed of two ATP-binding proteins (BMEII0863 and BMEII0864), two transmembrane proteins (BMEII0860 and BMEII0861) and a solute-binding protein (BMEII0859).

The protein resides in the cell inner membrane. Its function is as follows. Probably part of an ABC transporter complex that could be involved in peptide import. Probably responsible for the translocation of the substrate across the membrane. The sequence is that of Putative peptide permease protein BMEII0861 from Brucella melitensis biotype 1 (strain ATCC 23456 / CCUG 17765 / NCTC 10094 / 16M).